We begin with the raw amino-acid sequence, 614 residues long: Elongation factor 4 (614 aa).

Positions 10-192 constitute a tr-type G domain; it reads ALIRNFCIIA…EIVARIPPPV (183 aa). Residues 22-27 and 139-142 each bind GTP; these read DHGKST and NKID.

The protein belongs to the TRAFAC class translation factor GTPase superfamily. Classic translation factor GTPase family. LepA subfamily.

The protein localises to the cell membrane. It catalyses the reaction GTP + H2O = GDP + phosphate + H(+). In terms of biological role, required for accurate and efficient protein synthesis under certain stress conditions. May act as a fidelity factor of the translation reaction, by catalyzing a one-codon backward translocation of tRNAs on improperly translocated ribosomes. Back-translocation proceeds from a post-translocation (POST) complex to a pre-translocation (PRE) complex, thus giving elongation factor G a second chance to translocate the tRNAs correctly. Binds to ribosomes in a GTP-dependent manner. In Thermobifida fusca (strain YX), this protein is Elongation factor 4.